The primary structure comprises 684 residues: Fermitin family homolog 2 (684 aa).

The interval 40-81 (HIGGVMLKLVEKLDVKKDWSDHALWWEKKKTWLLKTHWTLDK) is interaction with membranes containing phosphatidylinositol phosphate. Residues 141–163 (LRKPRDPKKKKKKLEDAEEETLE) are disordered. The 299-residue stretch at 279 to 577 (DLNPKYDAIR…SLPEFGITHF (299 aa)) folds into the FERM domain. The PH domain maps to 378 to 474 (KVFKPKKLTL…WMAACRLASK (97 aa)). Lys381 contributes to the a 1,2-diacyl-sn-glycero-3-phospho-(1D-myo-inositol-3,4,5-trisphosphate) binding site.

Belongs to the kindlin family.

Its subcellular location is the cytoplasm. It is found in the cell cortex. The protein localises to the cytoskeleton. It localises to the stress fiber. The protein resides in the cell junction. Its subcellular location is the focal adhesion. It is found in the membrane. The protein localises to the cell projection. It localises to the lamellipodium membrane. The protein resides in the nucleus. Its subcellular location is the myofibril. It is found in the sarcomere. The protein localises to the i band. It localises to the cell surface. Scaffolding protein that enhances integrin activation mediated by TLN1 and/or TLN2, but activates integrins only weakly by itself. Binds to membranes enriched in phosphoinositides. Enhances integrin-mediated cell adhesion onto the extracellular matrix and cell spreading; this requires both its ability to interact with integrins and with phospholipid membranes. Required for the assembly of focal adhesions. Participates in the connection between extracellular matrix adhesion sites and the actin cytoskeleton and also in the orchestration of actin assembly and cell shape modulation. Plays a role in the TGFB1 and integrin signaling pathways. Stabilizes active CTNNB1 and plays a role in the regulation of transcription mediated by CTNNB1 and TCF7L2/TCF4 and in Wnt signaling. Required for normal embryonic development, including normal heart morphogenesis and normal angiogenesis. The protein is Fermitin family homolog 2 (fermt2) of Danio rerio (Zebrafish).